Consider the following 397-residue polypeptide: Putative odorant receptor 83c (397 aa).

The Cytoplasmic portion of the chain corresponds to 1–39; it reads MSTSESPSSRFRELSKYINSLTNLLGVDFLSPKLKFNYR. A helical membrane pass occupies residues 40–60; it reads TWTTIFAIANYTGFTVFTILN. Over 61-70 the chain is Extracellular; the sequence is NGGDWRVGLK. A helical membrane pass occupies residues 71 to 90; it reads ASLMTGGLFHGLGKFLTCLL. Over 91–136 the chain is Cytoplasmic; it reads KHQDMRRLVLYSQSIYDEYETRGDSYHRTLNSNIDRLLGIMKIIRN. Residues 137–157 traverse the membrane as a helical segment; that stretch reads GYVFAFCLMELLPLAMLMYDG. At 158–186 the chain is on the extracellular side; that stretch reads TRVTAMQYLIPGLPLENNYCYVVTYMIQT. A helical membrane pass occupies residues 187–207; that stretch reads VTMLVQGVGFYSGDLFVFLGL. Topologically, residues 208–282 are cytoplasmic; the sequence is TQILTFADML…ALYYELIATQ (75 aa). The helical transmembrane segment at 283 to 299 threads the bilayer; sequence VLSMALAMMLSFCINLS. The Extracellular portion of the chain corresponds to 300 to 305; it reads SFHMPS. A helical membrane pass occupies residues 306–326; it reads AIFFVVSAYSMSIYCILGTIL. Residues 327–365 lie on the Cytoplasmic side of the membrane; the sequence is EFAYDQVYESICNVTWYELSGEQRKLFGFLLRESQYPHN. The chain crosses the membrane as a helical span at residues 366–386; the sequence is IQILGVMSLSVRTALQIVKLI. Residues 387–397 are Extracellular-facing; sequence YSVSMMMMNRA.

This sequence belongs to the insect chemoreceptor superfamily. Heteromeric odorant receptor channel (TC 1.A.69) family. Or67d subfamily. In terms of assembly, interacts with Orco. Complexes exist early in the endomembrane system in olfactory sensory neurons (OSNs), coupling these complexes to the conserved ciliary trafficking pathway. As to expression, expressed in olfactory sensory neurons in the antenna.

The protein resides in the cell membrane. Its function is as follows. Odorant receptor which mediates acceptance or avoidance behavior, depending on its substrates. The odorant receptor repertoire encodes a large collection of odor stimuli that vary widely in identity, intensity, and duration. May form a complex with Orco to form odorant-sensing units, providing sensitive and prolonged odorant signaling and calcium permeability. This chain is Putative odorant receptor 83c (Or83c), found in Drosophila melanogaster (Fruit fly).